The primary structure comprises 742 residues: NAD(P)H-quinone oxidoreductase subunit 5, chloroplastic (742 aa).

The next 16 helical transmembrane spans lie at 9-29, 40-60, 89-109, 125-145, 147-167, 185-205, 219-239, 258-278, 283-303, 327-347, 354-374, 396-416, 425-445, 550-570, 606-626, and 722-742; these read WIIPFLPLPVPMLIGLGLLLF, WSFQSVLLLSIVMIFSMNLSI, IDPLTSIMLILITTVGIMVLI, FAYMSFFSTSMLGLVTSSNLI, IYIFWELVGICSYLLIGFWFT, GDFGLLLGILGFYWITGSFEF, NEVNFLFVTLCAILLFAGAIA, TPISALIHAATMVAAGIFLVA, LFIVIPHIMNFISLIGIITVF, LGYMMLALGMGSYRSALFHLI, ALLFLGSGSVIHSMETLVGYC, NSFLLGTLSLCGIPPLACFWS, WLYSPIFGIIAWSTAGLTAFY, LFPILILILFTLFVGFLGIPF, FFSVSIASFGIFIAFFLYKPV, and YLFFYFSYVAIFLLIYYFFNV.

It belongs to the complex I subunit 5 family. As to quaternary structure, NDH is composed of at least 16 different subunits, 5 of which are encoded in the nucleus.

The protein resides in the plastid. Its subcellular location is the chloroplast thylakoid membrane. It carries out the reaction a plastoquinone + NADH + (n+1) H(+)(in) = a plastoquinol + NAD(+) + n H(+)(out). The enzyme catalyses a plastoquinone + NADPH + (n+1) H(+)(in) = a plastoquinol + NADP(+) + n H(+)(out). Its function is as follows. NDH shuttles electrons from NAD(P)H:plastoquinone, via FMN and iron-sulfur (Fe-S) centers, to quinones in the photosynthetic chain and possibly in a chloroplast respiratory chain. The immediate electron acceptor for the enzyme in this species is believed to be plastoquinone. Couples the redox reaction to proton translocation, and thus conserves the redox energy in a proton gradient. The chain is NAD(P)H-quinone oxidoreductase subunit 5, chloroplastic (ndhF) from Lactuca sativa (Garden lettuce).